Consider the following 351-residue polypeptide: Photosystem II D2 protein (351 aa).

Residues 39-59 (TAYLALGGWFTGTTFVTSWYT) form a helical membrane-spanning segment. A chlorophyll a-binding site is contributed by H116. The chain crosses the membrane as a helical span at residues 123–139 (GFMLRQFEIARLVGIRP). 2 residues coordinate pheophytin a: Q128 and N141. A helical membrane pass occupies residues 151 to 164 (VFLACFLIYPLGQH). Chlorophyll a is bound at residue H196. The chain crosses the membrane as a helical span at residues 206 to 226 (GALLCGIHGATVQNTLFEDGA). 2 residues coordinate a plastoquinone: H213 and F260. Position 213 (H213) interacts with Fe cation. Fe cation is bound at residue H267. Residues 277–293 (GMWTPSVGIVGLAVNLR) form a helical membrane-spanning segment.

This sequence belongs to the reaction center PufL/M/PsbA/D family. PSII is composed of 1 copy each of membrane proteins PsbA, PsbB, PsbC, PsbD, PsbE, PsbF, PsbH, PsbI, PsbJ, PsbK, PsbL, PsbM, PsbT, PsbX, PsbY, Psb30/Ycf12, peripheral proteins PsbO, CyanoQ (PsbQ), PsbU, PsbV and a large number of cofactors. It forms dimeric complexes. The cofactor is The D1/D2 heterodimer binds P680, chlorophylls that are the primary electron donor of PSII, and subsequent electron acceptors. It shares a non-heme iron and each subunit binds pheophytin, quinone, additional chlorophylls, carotenoids and lipids. There is also a Cl(-1) ion associated with D1 and D2, which is required for oxygen evolution. The PSII complex binds additional chlorophylls, carotenoids and specific lipids..

Its subcellular location is the cellular thylakoid membrane. The enzyme catalyses 2 a plastoquinone + 4 hnu + 2 H2O = 2 a plastoquinol + O2. Its function is as follows. Photosystem II (PSII) is a light-driven water:plastoquinone oxidoreductase that uses light energy to abstract electrons from H(2)O, generating O(2) and a proton gradient subsequently used for ATP formation. It consists of a core antenna complex that captures photons, and an electron transfer chain that converts photonic excitation into a charge separation. The D1/D2 (PsbA/PsbD) reaction center heterodimer binds P680, the primary electron donor of PSII as well as several subsequent electron acceptors. D2 is needed for assembly of a stable PSII complex. The sequence is that of Photosystem II D2 protein from Prochlorococcus marinus (strain MIT 9313).